A 134-amino-acid polypeptide reads, in one-letter code: Perlwapin (134 aa).

WAP domains follow at residues 2–45, 46–89, and 90–132; these read GPNL…CVPK, PKPG…YRPE, and KPGS…EKPC. 12 disulfides stabilise this stretch: Cys8–Cys34, Cys17–Cys38, Cys21–Cys33, Cys27–Cys42, Cys51–Cys77, Cys59–Cys82, Cys64–Cys76, Cys70–Cys85, Cys94–Cys121, Cys104–Cys124, Cys108–Cys120, and Cys114–Cys128.

In terms of tissue distribution, nacreous layer of shell.

Functionally, inhibits growth of calcium carbonate crystals. May inhibit growth of certain crystallographic planes in the mineral phase of nacre in the shell. This is Perlwapin from Haliotis laevigata (Smooth Australian abalone).